The following is a 430-amino-acid chain: Histidinol dehydrogenase (430 aa).

Positions 124, 185, and 208 each coordinate NAD(+). 3 residues coordinate substrate: Ser233, Gln255, and His258. Residues Gln255 and His258 each coordinate Zn(2+). Catalysis depends on proton acceptor residues Glu324 and His325. 4 residues coordinate substrate: His325, Asp358, Glu412, and His418. Asp358 lines the Zn(2+) pocket. His418 provides a ligand contact to Zn(2+).

This sequence belongs to the histidinol dehydrogenase family. Requires Zn(2+) as cofactor.

It catalyses the reaction L-histidinol + 2 NAD(+) + H2O = L-histidine + 2 NADH + 3 H(+). The protein operates within amino-acid biosynthesis; L-histidine biosynthesis; L-histidine from 5-phospho-alpha-D-ribose 1-diphosphate: step 9/9. Catalyzes the sequential NAD-dependent oxidations of L-histidinol to L-histidinaldehyde and then to L-histidine. The protein is Histidinol dehydrogenase of Leptospira biflexa serovar Patoc (strain Patoc 1 / Ames).